The following is a 227-amino-acid chain: Cytochrome c oxidase subunit 2 (227 aa).

Residues 1–14 lie on the Mitochondrial intermembrane side of the membrane; sequence MAHPVQLGLQDATS. Residues 15–45 traverse the membrane as a helical segment; the sequence is PVMEELVTFHDHALMAMFLISFLILYALSAT. The Mitochondrial matrix portion of the chain corresponds to 46–59; the sequence is LTTKLTNTNITDAQ. The chain crosses the membrane as a helical span at residues 60 to 87; the sequence is EMETIWTILPAVILVLIALPSLRILYMT. The Mitochondrial intermembrane portion of the chain corresponds to 88-227; it reads DEINNPSFTI…IFEMGPVFTL (140 aa). Positions 161, 196, 198, 200, 204, and 207 each coordinate Cu cation. Residue glutamate 198 coordinates Mg(2+).

The protein belongs to the cytochrome c oxidase subunit 2 family. Component of the cytochrome c oxidase (complex IV, CIV), a multisubunit enzyme composed of 14 subunits. The complex is composed of a catalytic core of 3 subunits MT-CO1, MT-CO2 and MT-CO3, encoded in the mitochondrial DNA, and 11 supernumerary subunits COX4I, COX5A, COX5B, COX6A, COX6B, COX6C, COX7A, COX7B, COX7C, COX8 and NDUFA4, which are encoded in the nuclear genome. The complex exists as a monomer or a dimer and forms supercomplexes (SCs) in the inner mitochondrial membrane with NADH-ubiquinone oxidoreductase (complex I, CI) and ubiquinol-cytochrome c oxidoreductase (cytochrome b-c1 complex, complex III, CIII), resulting in different assemblies (supercomplex SCI(1)III(2)IV(1) and megacomplex MCI(2)III(2)IV(2)). Found in a complex with TMEM177, COA6, COX18, COX20, SCO1 and SCO2. Interacts with TMEM177 in a COX20-dependent manner. Interacts with COX20. Interacts with COX16. The cofactor is Cu cation.

The protein localises to the mitochondrion inner membrane. The catalysed reaction is 4 Fe(II)-[cytochrome c] + O2 + 8 H(+)(in) = 4 Fe(III)-[cytochrome c] + 2 H2O + 4 H(+)(out). Functionally, component of the cytochrome c oxidase, the last enzyme in the mitochondrial electron transport chain which drives oxidative phosphorylation. The respiratory chain contains 3 multisubunit complexes succinate dehydrogenase (complex II, CII), ubiquinol-cytochrome c oxidoreductase (cytochrome b-c1 complex, complex III, CIII) and cytochrome c oxidase (complex IV, CIV), that cooperate to transfer electrons derived from NADH and succinate to molecular oxygen, creating an electrochemical gradient over the inner membrane that drives transmembrane transport and the ATP synthase. Cytochrome c oxidase is the component of the respiratory chain that catalyzes the reduction of oxygen to water. Electrons originating from reduced cytochrome c in the intermembrane space (IMS) are transferred via the dinuclear copper A center (CU(A)) of subunit 2 and heme A of subunit 1 to the active site in subunit 1, a binuclear center (BNC) formed by heme A3 and copper B (CU(B)). The BNC reduces molecular oxygen to 2 water molecules using 4 electrons from cytochrome c in the IMS and 4 protons from the mitochondrial matrix. In Theropithecus gelada (Gelada baboon), this protein is Cytochrome c oxidase subunit 2 (MT-CO2).